Here is a 520-residue protein sequence, read N- to C-terminus: Transactivator/viroplasmin protein (520 aa).

The disordered stretch occupies residues 486–520 (VQDASADSGPKDGPPPTRSIVEKEDVPTTSSKQVD).

The protein belongs to the caulimoviridae viroplasmin family.

It localises to the host cytoplasm. In terms of biological role, enhances the ribosomal termination-reinitiation event leading to the translation of major open reading frames on the polycistronic viral RNAs. This is Transactivator/viroplasmin protein from Cauliflower mosaic virus (strain NY8153) (CaMV).